A 381-amino-acid polypeptide reads, in one-letter code: Alkanesulfonate monooxygenase (381 aa).

Belongs to the SsuD family. In terms of assembly, homotetramer.

The catalysed reaction is an alkanesulfonate + FMNH2 + O2 = an aldehyde + FMN + sulfite + H2O + 2 H(+). In terms of biological role, catalyzes the desulfonation of aliphatic sulfonates. This is Alkanesulfonate monooxygenase from Escherichia coli (strain SMS-3-5 / SECEC).